The primary structure comprises 270 residues: MEILVCVKQVPDTAEVKIDPVKHTVIRAGVPNIFNPFDQNALEAALALKDADKDVKITLLSMGPDQAKDVLREGLAMGADDAYLLSDRKLGGSDTLATGYALAQAIKKLAADKGIEQFDIILCGKQAIDGDTAQVGPQIACELGIPQITYARDIKVEGDKVTVQQENEEGYIVTEAQFPVLITAVKDLNEPRFPTIRGTMKAKRREIPNLDAAAVAADDAQIGLSGSPTKVRKIFTPPQRSGGLVLKVEDDNEQAIVDQVMEKLVAQKII.

Belongs to the ETF alpha-subunit/FixB family. As to quaternary structure, heterodimer of an alpha and a beta subunit. The cofactor is FAD.

In terms of biological role, the electron transfer flavoprotein serves as a specific electron acceptor for other dehydrogenases. It transfers the electrons to the main respiratory chain via ETF-ubiquinone oxidoreductase (ETF dehydrogenase). This is Electron transfer flavoprotein subunit beta (etfB) from Megasphaera elsdenii.